The following is a 341-amino-acid chain: MQSITVALDAMGGDFGPRVTVPAAVQALSHFPELKVILTGDQQQITSQLSLLGYKPDARLSVQHCDRMISNSEKPSLALRNSQGSSMRHAIELVADSTADACVSGGNTGALMALSRFILKLLPGIDRPALISALPTVTGGRSWMLDLGANVSCDADTLFQFAVMGSALAEEHLNRAPRVAVLNVGEEETKGNDLVKRCAELLSQTQAVHFVGYIEGNQILKNAADVIVCDGFVGNVCLKASEGTAQLFIEKIKTSMMASSIKGWIARILFSELFNELKTLNPDQYNGASLLGLRGIVIKSHGSADVSALVNAIGEAVHEVKRQVPSRISDRLEAVLLERHY.

It belongs to the PlsX family. As to quaternary structure, homodimer. Probably interacts with PlsY.

It is found in the cytoplasm. The catalysed reaction is a fatty acyl-[ACP] + phosphate = an acyl phosphate + holo-[ACP]. Its pathway is lipid metabolism; phospholipid metabolism. In terms of biological role, catalyzes the reversible formation of acyl-phosphate (acyl-PO(4)) from acyl-[acyl-carrier-protein] (acyl-ACP). This enzyme utilizes acyl-ACP as fatty acyl donor, but not acyl-CoA. This Vibrio vulnificus (strain CMCP6) protein is Phosphate acyltransferase.